Consider the following 201-residue polypeptide: 3-isopropylmalate dehydratase small subunit (201 aa).

This sequence belongs to the LeuD family. LeuD type 1 subfamily. In terms of assembly, heterodimer of LeuC and LeuD.

The enzyme catalyses (2R,3S)-3-isopropylmalate = (2S)-2-isopropylmalate. Its pathway is amino-acid biosynthesis; L-leucine biosynthesis; L-leucine from 3-methyl-2-oxobutanoate: step 2/4. Catalyzes the isomerization between 2-isopropylmalate and 3-isopropylmalate, via the formation of 2-isopropylmaleate. In Shewanella piezotolerans (strain WP3 / JCM 13877), this protein is 3-isopropylmalate dehydratase small subunit.